The sequence spans 217 residues: tRNA (guanine-N(7)-)-methyltransferase (217 aa).

S-adenosyl-L-methionine is bound by residues glutamate 43, aspartate 68, asparagine 101, and asparagine 123. Lysine 127 contributes to the substrate binding site. The segment at 129-134 (RHNKRR) is interaction with RNA. Substrate contacts are provided by residues aspartate 159 and 196 to 199 (TEYE).

The protein belongs to the class I-like SAM-binding methyltransferase superfamily. TrmB family.

It carries out the reaction guanosine(46) in tRNA + S-adenosyl-L-methionine = N(7)-methylguanosine(46) in tRNA + S-adenosyl-L-homocysteine. Its pathway is tRNA modification; N(7)-methylguanine-tRNA biosynthesis. Its function is as follows. Catalyzes the formation of N(7)-methylguanine at position 46 (m7G46) in tRNA. The sequence is that of tRNA (guanine-N(7)-)-methyltransferase from Clostridium botulinum (strain Loch Maree / Type A3).